The primary structure comprises 987 residues: MSSYRLPKRGLVDRNVPLSFTFDGRPMQGLEGDTLASALLANGRMLVGRSFKYHRPRGILTAGAAEPNALVTVGRGGRAEPNTRATMQELYEGLEARSQNRWPSLAFDIGALNGLLSPFLGAGFYYKTFMWPAPLWEKLYEPVIRRAAGLGKASYEADPDAYEKSWAHCDLLVIGAGPTGLAAALTAGRAGARVILVDEGSLPGGSLLSDTATIDGKAAADFARDTSDELRSMPNVQVLVRTTAFGWYDGNVFGAVERVQKHVREPASHLPVERLWRIVAGKALLATGAEERPLVFGGNDRPGVMMAGAMRAYLNRYGVAPGRTPAIFTTNDTGYTLAQELEAAGVDVVAIVDSRPAAGVDYRGKARLVREAVVCGTKGGKAISAIEVHHGGRTETIAVDALAMAGGFDPIIHLACHRGGKPVWSAEKAAFLAPGSLKGLEVAGGAAATTGLAACLGEGAARAEAIVRELGLPCPPVAVVKVESEEGIRSPAPLWSIPGIKDKAFVDFQNDVHLKDIGLAVREGYSHVELAKRYTTSGMATDQGKLSNVNAIGLIAKARGVSPAEVGTTTFRPFYTPVSFGALTGAHTGHHFQPVRKSPLHDWAKKHGAVFVETGLWYRSSWFPRSGERTWRESVEREVLNVRKNAGLCDVSMLGKIEITGSDAAEFLNRVYCNAFLKLPVGKARYGLMLREDGFIYDDGTTSRLEENRFFMTTTTAYAAGVMNHLEFCAQVLWPQLDVRLASITDQWAQMAIAGPKARMILQKIVDEDISDAAFPFLAAKEVSLFGGALHGCLFRISFSGELAYELAVPAGYGESIADALLEAGKDHGIMPYGVETLSVLRIEKGHVTHNEINGTIVPADLGFGKMVSAGKPDFVGKAMLQREGLTAPDRPQLVGVVPLDPQQSFRSGSHILAKGAAATLENDEGYVTSSAYSPHVGSTIALALVRNGRNRHGEEVLVWSGLHGESTPARLCNPVFFDPQNERLHV.

Residues Asp-198, Glu-199, Ser-206, Ala-244, and Gly-445 each contribute to the NAD(+) site. Positions 714 and 806 each coordinate (6R)-5,10-methylene-5,6,7,8-tetrahydrofolate.

The protein belongs to the GcvT family. Heterotetramer composed of subunits alpha (SoxA), beta (SoxB), gamma (SoxG) and delta (SoxD). Requires NAD(+) as cofactor.

The protein resides in the cytoplasm. It carries out the reaction sarcosine + (6S)-5,6,7,8-tetrahydrofolate + O2 = (6R)-5,10-methylene-5,6,7,8-tetrahydrofolate + glycine + H2O2. The enzyme catalyses sarcosine + O2 + H2O = formaldehyde + glycine + H2O2. Functionally, in the presence of tetrahydrofolate, catalyzes the oxidative demethylation of sarcosine to yield glycine, 5,10-methylenetetrahydrofolate and hydrogen peroxide. In the absence of tetrahydrofolate, catalyzes the oxidative demethylation of sarcosine to yield glycine, formaldehyde and hydrogen peroxide. This chain is Sarcosine oxidase subunit alpha (soxA), found in Rhizobium meliloti (strain 1021) (Ensifer meliloti).